The primary structure comprises 161 residues: 2-C-methyl-D-erythritol 2,4-cyclodiphosphate synthase (161 aa).

Residues Asp10 and His12 each contribute to the a divalent metal cation site. 4-CDP-2-C-methyl-D-erythritol 2-phosphate-binding positions include 10-12 (DVH) and 36-37 (HS). His44 serves as a coordination point for a divalent metal cation. 4-CDP-2-C-methyl-D-erythritol 2-phosphate-binding positions include 58–60 (DIG), 63–67 (FPDTD), 134–137 (TTTE), Phe141, and Arg144.

This sequence belongs to the IspF family. As to quaternary structure, homotrimer. It depends on a divalent metal cation as a cofactor.

It carries out the reaction 4-CDP-2-C-methyl-D-erythritol 2-phosphate = 2-C-methyl-D-erythritol 2,4-cyclic diphosphate + CMP. It participates in isoprenoid biosynthesis; isopentenyl diphosphate biosynthesis via DXP pathway; isopentenyl diphosphate from 1-deoxy-D-xylulose 5-phosphate: step 4/6. In terms of biological role, involved in the biosynthesis of isopentenyl diphosphate (IPP) and dimethylallyl diphosphate (DMAPP), two major building blocks of isoprenoid compounds. Catalyzes the conversion of 4-diphosphocytidyl-2-C-methyl-D-erythritol 2-phosphate (CDP-ME2P) to 2-C-methyl-D-erythritol 2,4-cyclodiphosphate (ME-CPP) with a corresponding release of cytidine 5-monophosphate (CMP). This chain is 2-C-methyl-D-erythritol 2,4-cyclodiphosphate synthase, found in Shewanella putrefaciens (strain CN-32 / ATCC BAA-453).